Reading from the N-terminus, the 368-residue chain is Peptide chain release factor 2 (368 aa).

At Gln250 the chain carries N5-methylglutamine.

It belongs to the prokaryotic/mitochondrial release factor family. Methylated by PrmC. Methylation increases the termination efficiency of RF2.

The protein resides in the cytoplasm. In terms of biological role, peptide chain release factor 2 directs the termination of translation in response to the peptide chain termination codons UGA and UAA. The chain is Peptide chain release factor 2 from Chlamydia abortus (strain DSM 27085 / S26/3) (Chlamydophila abortus).